A 797-amino-acid chain; its full sequence is Probable exo-1,4-beta-xylosidase bxlB (797 aa).

The first 21 residues, 1-21 (MPLICIVYFLQYLDKIAISYA), serve as a signal peptide directing secretion. Asn-86 and Asn-126 each carry an N-linked (GlcNAc...) asparagine glycan. Residue Asp-312 is part of the active site. N-linked (GlcNAc...) asparagine glycosylation is found at Asn-364, Asn-431, Asn-442, Asn-483, Asn-644, and Asn-787.

Belongs to the glycosyl hydrolase 3 family.

It localises to the secreted. The enzyme catalyses Hydrolysis of (1-&gt;4)-beta-D-xylans, to remove successive D-xylose residues from the non-reducing termini.. Its pathway is glycan degradation; xylan degradation. Its function is as follows. Xylan 1,4-beta-xylosidase involved in the hydrolysis of xylan, a major structural heterogeneous polysaccharide found in plant biomass representing the second most abundant polysaccharide in the biosphere, after cellulose. The chain is Probable exo-1,4-beta-xylosidase bxlB (bxlB) from Aspergillus oryzae (strain ATCC 42149 / RIB 40) (Yellow koji mold).